A 165-amino-acid chain; its full sequence is Small ribosomal subunit protein uS5 (165 aa).

The S5 DRBM domain occupies 10–73 (LVEKLVSVDR…EAAKRNMITV (64 aa)).

The protein belongs to the universal ribosomal protein uS5 family. As to quaternary structure, part of the 30S ribosomal subunit. Contacts proteins S4 and S8.

Its function is as follows. With S4 and S12 plays an important role in translational accuracy. In terms of biological role, located at the back of the 30S subunit body where it stabilizes the conformation of the head with respect to the body. The sequence is that of Small ribosomal subunit protein uS5 from Psychrobacter sp. (strain PRwf-1).